The primary structure comprises 259 residues: Protein unc-50 homolog A (259 aa).

Residues 1-82 (MLPTTSVSPR…TKDQWARDDP (82 aa)) lie on the Cytoplasmic side of the membrane. Residues 83–103 (AFLVLLSIWLCVSTVGFGFVL) traverse the membrane as a helical segment. The Lumenal segment spans residues 104-112 (DMSFFETFK). The helical transmembrane segment at 113–133 (LLLWVVFIDCVGVGLLIATLM) threads the bilayer. Residues 134–158 (WFVSNKYMVKRQGKDYDVEWGYTFD) lie on the Cytoplasmic side of the membrane. The chain crosses the membrane as a helical span at residues 159 to 179 (VHLNAFYPLLVILHFIQLFFI). At 180–181 (NH) the chain is on the lumenal side. The helical transmembrane segment at 182–202 (VILSGWFIGYFVGNTIWLIAI) threads the bilayer. At 203 to 222 (GYYIYITFLGYSALPFLKNT) the chain is on the cytoplasmic side. Residues 223-243 (VILLYPFAALALLYVLSLALG) form a helical membrane-spanning segment. Residues 244-259 (WNFTEKLCLFYKYRVR) are Lumenal-facing.

Belongs to the unc-50 family.

The protein resides in the nucleus inner membrane. Its subcellular location is the golgi apparatus membrane. Involved in the cell surface expression of neuronal nicotinic receptors. Binds RNA. The chain is Protein unc-50 homolog A (unc50-a) from Xenopus laevis (African clawed frog).